Consider the following 115-residue polypeptide: U3-lycotoxin-Ls1k (115 aa).

An N-terminal signal peptide occupies residues 1–20 (MKFELLFGVLLVTLFSYSSA). The propeptide occupies 21–44 (EMLDDFDQADEDELLSLIEKEEAR). Disulfide bonds link C48–C63, C55–C72, C62–C87, and C74–C85.

The protein belongs to the neurotoxin 19 (CSTX) family. 01 subfamily. In terms of tissue distribution, expressed by the venom gland.

Its subcellular location is the secreted. The protein is U3-lycotoxin-Ls1k of Lycosa singoriensis (Wolf spider).